The chain runs to 267 residues: Indole-3-glycerol phosphate synthase (267 aa).

The protein belongs to the TrpC family.

It carries out the reaction 1-(2-carboxyphenylamino)-1-deoxy-D-ribulose 5-phosphate + H(+) = (1S,2R)-1-C-(indol-3-yl)glycerol 3-phosphate + CO2 + H2O. The protein operates within amino-acid biosynthesis; L-tryptophan biosynthesis; L-tryptophan from chorismate: step 4/5. The polypeptide is Indole-3-glycerol phosphate synthase (Ralstonia pickettii (strain 12J)).